A 264-amino-acid chain; its full sequence is 3-methyl-2-oxobutanoate hydroxymethyltransferase (264 aa).

The Mg(2+) site is built by aspartate 45 and aspartate 84. 3-methyl-2-oxobutanoate is bound by residues 45-46 (DS), aspartate 84, and lysine 112. Glutamate 114 contributes to the Mg(2+) binding site. The active-site Proton acceptor is glutamate 181.

It belongs to the PanB family. In terms of assembly, homodecamer; pentamer of dimers. Mg(2+) serves as cofactor.

The protein resides in the cytoplasm. The catalysed reaction is 3-methyl-2-oxobutanoate + (6R)-5,10-methylene-5,6,7,8-tetrahydrofolate + H2O = 2-dehydropantoate + (6S)-5,6,7,8-tetrahydrofolate. It functions in the pathway cofactor biosynthesis; (R)-pantothenate biosynthesis; (R)-pantoate from 3-methyl-2-oxobutanoate: step 1/2. Functionally, catalyzes the reversible reaction in which hydroxymethyl group from 5,10-methylenetetrahydrofolate is transferred onto alpha-ketoisovalerate to form ketopantoate. The polypeptide is 3-methyl-2-oxobutanoate hydroxymethyltransferase (Shewanella sp. (strain MR-7)).